Consider the following 1255-residue polypeptide: Cilia- and flagella-associated protein 337 B (1255 aa).

The EF-hand domain occupies 87 to 122 (KLVRCLTNLFEEIDLNGNGILEWDEFTNYVIEKATV). D100, N102, N104, and E111 together coordinate Ca(2+). 12 WD repeats span residues 228 to 269 (DLKT…WVLA), 282 to 322 (EFKN…KELE), 326 to 365 (AHTE…KKRV), 368 to 407 (EHTR…LIYK), 410 to 449 (GHSS…NVQC), 496 to 536 (VDDY…KIFS), 538 to 577 (VTQG…MIKA), 580 to 624 (KHSA…RTLE), 625 to 664 (LKDV…QNGS), 669 to 708 (TQYE…FKFQ), 769 to 808 (QQNL…TILE), and 844 to 883 (AHYE…LIDQ). Disordered stretches follow at residues 941–988 (IKSL…NFNP) and 1140–1160 (QQQV…QQPG). Positions 953–969 (TQESSTQEQEAAQQPQQ) are enriched in low complexity. Polar residues predominate over residues 1148–1160 (TEPSSNRSHQQPG).

Belongs to the CFAP337 family. Associates with components of the nexin-dynein regulatory complex (N-DRC) and the CFAP184:CFAP263 complex.

The protein resides in the cell projection. It is found in the cilium. Its function is as follows. Associates with components of the nexin-dynein regulatory complex (N-DRC), a key regulator of ciliary/flagellar motility, and might act as an inner dynein arm (IDA) hub or linkage. The sequence is that of Cilia- and flagella-associated protein 337 B from Tetrahymena thermophila (strain SB210).